Reading from the N-terminus, the 484-residue chain is Glutamyl-tRNA(Gln) amidotransferase subunit A (484 aa).

Residues lysine 78 and serine 153 each act as charge relay system in the active site. Residue serine 177 is the Acyl-ester intermediate of the active site.

Belongs to the amidase family. GatA subfamily. Heterotrimer of A, B and C subunits.

The catalysed reaction is L-glutamyl-tRNA(Gln) + L-glutamine + ATP + H2O = L-glutaminyl-tRNA(Gln) + L-glutamate + ADP + phosphate + H(+). In terms of biological role, allows the formation of correctly charged Gln-tRNA(Gln) through the transamidation of misacylated Glu-tRNA(Gln) in organisms which lack glutaminyl-tRNA synthetase. The reaction takes place in the presence of glutamine and ATP through an activated gamma-phospho-Glu-tRNA(Gln). This chain is Glutamyl-tRNA(Gln) amidotransferase subunit A, found in Thermodesulfovibrio yellowstonii (strain ATCC 51303 / DSM 11347 / YP87).